The primary structure comprises 301 residues: Lipoyl synthase (301 aa).

Cysteine 53, cysteine 58, cysteine 64, cysteine 79, cysteine 83, cysteine 86, and serine 290 together coordinate [4Fe-4S] cluster. The region spanning 65–279 (WSRKTATYML…RIYGKSIGFK (215 aa)) is the Radical SAM core domain.

It belongs to the radical SAM superfamily. Lipoyl synthase family. The cofactor is [4Fe-4S] cluster.

Its subcellular location is the cytoplasm. It carries out the reaction [[Fe-S] cluster scaffold protein carrying a second [4Fe-4S](2+) cluster] + N(6)-octanoyl-L-lysyl-[protein] + 2 oxidized [2Fe-2S]-[ferredoxin] + 2 S-adenosyl-L-methionine + 4 H(+) = [[Fe-S] cluster scaffold protein] + N(6)-[(R)-dihydrolipoyl]-L-lysyl-[protein] + 4 Fe(3+) + 2 hydrogen sulfide + 2 5'-deoxyadenosine + 2 L-methionine + 2 reduced [2Fe-2S]-[ferredoxin]. The protein operates within protein modification; protein lipoylation via endogenous pathway; protein N(6)-(lipoyl)lysine from octanoyl-[acyl-carrier-protein]: step 2/2. Functionally, catalyzes the radical-mediated insertion of two sulfur atoms into the C-6 and C-8 positions of the octanoyl moiety bound to the lipoyl domains of lipoate-dependent enzymes, thereby converting the octanoylated domains into lipoylated derivatives. The protein is Lipoyl synthase of Leptospira interrogans serogroup Icterohaemorrhagiae serovar Lai (strain 56601).